The sequence spans 1094 residues: Carbamoyl phosphate synthase large chain (1094 aa).

A carboxyphosphate synthetic domain region spans residues 1–402 (MPRRSDLHRI…AFQKALRALE (402 aa)). Residues R129, R169, G175, G176, R208, L210, E215, G241, V242, H243, Q285, and E299 each contribute to the ATP site. One can recognise an ATP-grasp 1 domain in the interval 133 to 328 (GEAMEKIGLR…IARIGAKLAV (196 aa)). Mg(2+) is bound by residues Q285, E299, and N301. 3 residues coordinate Mn(2+): Q285, E299, and N301. The segment at 403–552 (TGRSGWTIAE…YLYGNYDEES (150 aa)) is oligomerization domain. Residues 553–936 (EAATEGRKKV…AFMKSQLAAD (384 aa)) form a carbamoyl phosphate synthetic domain region. The ATP-grasp 2 domain maps to 679 to 870 (EAIARELGIE…LPSVAARLML (192 aa)). Residues R715, R754, L756, E761, G786, I787, H788, S789, Q829, and E841 each contribute to the ATP site. The Mg(2+) site is built by Q829, E841, and N843. Mn(2+) contacts are provided by Q829, E841, and N843. Residues 937–1077 (NALPREGTVF…QEWHEILRAP (141 aa)) enclose the MGS-like domain. The allosteric domain stretch occupies residues 937-1094 (NALPREGTVF…AGSTQPAGVA (158 aa)).

This sequence belongs to the CarB family. As to quaternary structure, composed of two chains; the small (or glutamine) chain promotes the hydrolysis of glutamine to ammonia, which is used by the large (or ammonia) chain to synthesize carbamoyl phosphate. Tetramer of heterodimers (alpha,beta)4. It depends on Mg(2+) as a cofactor. Mn(2+) is required as a cofactor.

It carries out the reaction hydrogencarbonate + L-glutamine + 2 ATP + H2O = carbamoyl phosphate + L-glutamate + 2 ADP + phosphate + 2 H(+). The enzyme catalyses hydrogencarbonate + NH4(+) + 2 ATP = carbamoyl phosphate + 2 ADP + phosphate + 2 H(+). It functions in the pathway amino-acid biosynthesis; L-arginine biosynthesis; carbamoyl phosphate from bicarbonate: step 1/1. Its pathway is pyrimidine metabolism; UMP biosynthesis via de novo pathway; (S)-dihydroorotate from bicarbonate: step 1/3. In terms of biological role, large subunit of the glutamine-dependent carbamoyl phosphate synthetase (CPSase). CPSase catalyzes the formation of carbamoyl phosphate from the ammonia moiety of glutamine, carbonate, and phosphate donated by ATP, constituting the first step of 2 biosynthetic pathways, one leading to arginine and/or urea and the other to pyrimidine nucleotides. The large subunit (synthetase) binds the substrates ammonia (free or transferred from glutamine from the small subunit), hydrogencarbonate and ATP and carries out an ATP-coupled ligase reaction, activating hydrogencarbonate by forming carboxy phosphate which reacts with ammonia to form carbamoyl phosphate. In Gemmatimonas aurantiaca (strain DSM 14586 / JCM 11422 / NBRC 100505 / T-27), this protein is Carbamoyl phosphate synthase large chain.